A 93-amino-acid chain; its full sequence is Small ribosomal subunit protein uS19 (93 aa).

The disordered stretch occupies residues 73–93; sequence EFSPTRTFRGHVKDDRKSKRR. Residues 83-93 are compositionally biased toward basic and acidic residues; that stretch reads HVKDDRKSKRR.

This sequence belongs to the universal ribosomal protein uS19 family.

Its function is as follows. Protein S19 forms a complex with S13 that binds strongly to the 16S ribosomal RNA. The chain is Small ribosomal subunit protein uS19 from Streptomyces avermitilis (strain ATCC 31267 / DSM 46492 / JCM 5070 / NBRC 14893 / NCIMB 12804 / NRRL 8165 / MA-4680).